The sequence spans 155 residues: uncharacterized protein (155 aa).

The signal sequence occupies residues 1–30 (MTYNTNTSLSSYAGLSAFALSVFCILWGTA).

This is an uncharacterized protein from Treponema pallidum (strain Nichols).